Here is a 122-residue protein sequence, read N- to C-terminus: MIQQESRLKVADNTGAKELLTIRVLGGSGRRYASIGDTIVATVKDALPGAGVKKGDIVKAVVVRTTKERRRPDGFYIRFDENAAVLIKDGGDPRGTRIFGPVGRELRDKKFMRIISLAPEVL.

The protein belongs to the universal ribosomal protein uL14 family. In terms of assembly, part of the 50S ribosomal subunit. Forms a cluster with proteins L3 and L19. In the 70S ribosome, L14 and L19 interact and together make contacts with the 16S rRNA in bridges B5 and B8.

Its function is as follows. Binds to 23S rRNA. Forms part of two intersubunit bridges in the 70S ribosome. The sequence is that of Large ribosomal subunit protein uL14 from Thermobifida fusca (strain YX).